The following is a 904-amino-acid chain: Thiamine diphosphate dependent-3-acetyloctanal synthase PigD (904 aa).

Positions 879–904 are disordered; it reads RKAWAAQQPESTSTAFDQDPTQEATS. Residues 886–904 are compositionally biased toward polar residues; that stretch reads QPESTSTAFDQDPTQEATS.

The protein belongs to the TPP enzyme family. Thiamine diphosphate serves as cofactor.

The enzyme catalyses (2E)-octenal + pyruvate + H(+) = (S)-3-acetyloctanal + CO2. It functions in the pathway antibiotic biosynthesis; prodigiosin biosynthesis. In terms of biological role, involved in the biosynthesis of 2-methyl-3-n-amyl-pyrrole (MAP), one of the terminal products involved in the biosynthesis of the red antibiotic prodigiosin (Pig). Catalyzes the decarboxylation of pyruvate, followed by the modification of the resulting two-carbon fragment acetaldehyde at the C3 position of the 2-octenal (1,2-addition of acetaldehyde) giving 3-acetyloctanal. In vitro, it can act on a number of alpha,beta-unsaturated carbonyl compounds, including aldehydes and ketones, and can catalyze both 1,2-addition and Stetter-type 1,4-addition depending on the substrate. This is Thiamine diphosphate dependent-3-acetyloctanal synthase PigD from Serratia marcescens.